A 975-amino-acid chain; its full sequence is Kinesin heavy chain (975 aa).

The 322-residue stretch at 12–333 folds into the Kinesin motor domain; sequence SIKVVCRFRP…LDFGRRAKTV (322 aa). 92-99 contributes to the ATP binding site; that stretch reads GQTSSGKT. Residues 180-321 form a microtubule-binding region; it reads VSSPEDVFEV…PASFNESETK (142 aa). Positions 335-931 form a coiled coil; it reads NVVCVNEELT…DRIKEAVRQK (597 aa). Residues 810-891 are necessary for associating with milt; sequence VAKELQTLHN…LPKLEKRLRC (82 aa). A globular region spans residues 932–975; that stretch reads HLGRRGPQAQIAKPIRSGQGAIAIRGGGAVGGPSPLAQVNPVNS.

It belongs to the TRAFAC class myosin-kinesin ATPase superfamily. Kinesin family. Kinesin subfamily. In terms of assembly, oligomer composed of two heavy chains and two light chains.

The protein localises to the cytoplasm. It is found in the cytoskeleton. Its function is as follows. Kinesin is a microtubule-associated force-producing protein that may play a role in organelle transport. Milt and Miro form an essential protein complex that links Khc to mitochondria for light chain-independent, anterograde transport of mitochondria. The chain is Kinesin heavy chain (Khc) from Drosophila melanogaster (Fruit fly).